A 136-amino-acid polypeptide reads, in one-letter code: Small ribosomal subunit protein uS9 (136 aa).

Positions 97-136 (SPDNRKPLKTEGHLSRDPRAKERRKYGLKKARKAPQFSKR) are disordered. A compositionally biased stretch (basic and acidic residues) spans 98 to 116 (PDNRKPLKTEGHLSRDPRA). Over residues 117 to 136 (KERRKYGLKKARKAPQFSKR) the composition is skewed to basic residues.

It belongs to the universal ribosomal protein uS9 family.

The sequence is that of Small ribosomal subunit protein uS9 from Prochlorococcus marinus (strain AS9601).